Consider the following 131-residue polypeptide: Small ribosomal subunit protein uS11 (131 aa).

This sequence belongs to the universal ribosomal protein uS11 family. Part of the 30S ribosomal subunit. Interacts with proteins S7 and S18. Binds to IF-3.

Located on the platform of the 30S subunit, it bridges several disparate RNA helices of the 16S rRNA. Forms part of the Shine-Dalgarno cleft in the 70S ribosome. The protein is Small ribosomal subunit protein uS11 of Exiguobacterium sibiricum (strain DSM 17290 / CCUG 55495 / CIP 109462 / JCM 13490 / 255-15).